Reading from the N-terminus, the 504-residue chain is ATP synthase subunit beta (504 aa).

ATP is bound at residue Gly-181–Thr-188.

The protein belongs to the ATPase alpha/beta chains family. In terms of assembly, F-type ATPases have 2 components, CF(1) - the catalytic core - and CF(0) - the membrane proton channel. CF(1) has five subunits: alpha(3), beta(3), gamma(1), delta(1), epsilon(1). CF(0) has three main subunits: a(1), b(2) and c(9-12). The alpha and beta chains form an alternating ring which encloses part of the gamma chain. CF(1) is attached to CF(0) by a central stalk formed by the gamma and epsilon chains, while a peripheral stalk is formed by the delta and b chains.

Its subcellular location is the cell inner membrane. It carries out the reaction ATP + H2O + 4 H(+)(in) = ADP + phosphate + 5 H(+)(out). Its function is as follows. Produces ATP from ADP in the presence of a proton gradient across the membrane. The catalytic sites are hosted primarily by the beta subunits. This chain is ATP synthase subunit beta, found in Ehrlichia ruminantium (strain Gardel).